The primary structure comprises 780 residues: Elongation factor G-2, chloroplastic (780 aa).

The transit peptide at 1-79 (MAAESSLRVA…PRRNFSVFAM (79 aa)) directs the protein to the chloroplast. Residues 91-366 (KDYRNIGIMA…AVVDYLPSPL (276 aa)) form the tr-type G domain. GTP contacts are provided by residues 100-107 (AHIDAGKT), 164-168 (DTPGH), and 218-221 (NKMD).

It belongs to the TRAFAC class translation factor GTPase superfamily. Classic translation factor GTPase family. EF-G/EF-2 subfamily.

Its subcellular location is the plastid. The protein localises to the chloroplast. The protein operates within protein biosynthesis; polypeptide chain elongation. Its function is as follows. Chloroplast-localized elongation factor EF-G involved in protein synthesis in plastids. Catalyzes the GTP-dependent ribosomal translocation step during translation elongation. During this step, the ribosome changes from the pre-translocational (PRE) to the post-translocational (POST) state as the newly formed A-site-bound peptidyl-tRNA and P-site-bound deacylated tRNA move to the P and E sites, respectively. Catalyzes the coordinated movement of the two tRNA molecules, the mRNA and conformational changes in the ribosome. This is Elongation factor G-2, chloroplastic (fusA2) from Glycine max (Soybean).